A 118-amino-acid polypeptide reads, in one-letter code: Small ribosomal subunit protein uS13 (118 aa).

Residues 94-118 form a disordered region; sequence SLPLRGQRTKTNARTRKGPRKPIRK.

The protein belongs to the universal ribosomal protein uS13 family. As to quaternary structure, part of the 30S ribosomal subunit. Forms a loose heterodimer with protein S19. Forms two bridges to the 50S subunit in the 70S ribosome.

Functionally, located at the top of the head of the 30S subunit, it contacts several helices of the 16S rRNA. In the 70S ribosome it contacts the 23S rRNA (bridge B1a) and protein L5 of the 50S subunit (bridge B1b), connecting the 2 subunits; these bridges are implicated in subunit movement. Contacts the tRNAs in the A and P-sites. The protein is Small ribosomal subunit protein uS13 of Shewanella denitrificans (strain OS217 / ATCC BAA-1090 / DSM 15013).